Consider the following 856-residue polypeptide: Envelope glycoprotein gp160 (856 aa).

An N-terminal signal peptide occupies residues 1–31; sequence MRVKGIRRNCQHLWIWGTMLFGMWMICSAVE. Residues 32-684 lie on the Extracellular side of the membrane; sequence QLWVTVYYGV…ITNWLWYIKI (653 aa). Cys53 and Cys73 are oxidised to a cystine. Residues Asn87, Asn134, Asn140, Asn151, Asn155, Asn183, Asn197, Asn234, Asn241, Asn262, Asn276, Asn289, and Asn295 are each glycosylated (N-linked (GlcNAc...) asparagine; by host). 5 disulfides stabilise this stretch: Cys118–Cys205, Cys125–Cys196, Cys130–Cys152, Cys218–Cys247, and Cys228–Cys239. The segment at 130-151 is V1; that stretch reads CIDKNITDWENKTIIGGGEVKN. The interval 152–196 is V2; that stretch reads CSFNITTSIRDKVHKEYALFYKLDVVPIKSNNDSSTYTRYRLIHC. The tract at residues 296–329 is V3; it reads CTRPNNNVRRRHIHIGPGRAFYTGEIRGNIRQAH. Cysteines 296 and 330 form a disulfide. Residues Asn331, Asn338, Asn354, and Asn360 are each glycosylated (N-linked (GlcNAc...) asparagine; by host). Residues 362-372 form a CD4-binding loop region; sequence SSGGDPEIVTH. Cystine bridges form between Cys376-Cys444 and Cys383-Cys417. The segment at 383–417 is V4; the sequence is CDSTQLFNSTWNVTGISTEGNNNTEENGDTITLPC. N-linked (GlcNAc...) asparagine; by host glycans are attached at residues Asn390, Asn394, Asn404, Asn447, and Asn459. 2 V5 regions span residues 460–470 and 462–470; these read SSSREEIFRPG and SREEIFRPG. A fusion peptide region spans residues 511–532; that stretch reads AVGAIGAMFLGFLGAAGSTMGA. The tract at residues 574 to 592 is immunosuppression; the sequence is KQLQARVLAVERYLRDQQL. Cys598 and Cys604 are disulfide-bonded. N-linked (GlcNAc...) asparagine; by host glycans are attached at residues Asn611, Asn616, Asn625, and Asn637. Residues 633–667 adopt a coiled-coil conformation; that stretch reads REIDNYTSLIYNLIEESQNQQEKNEQELLELDKWA. An MPER; binding to GalCer region spans residues 662–683; the sequence is ELDKWASLWNWFSITNWLWYIK. A helical membrane pass occupies residues 685–705; it reads FIMIVGGLVGLRIVFSVLSIV. Residues 706–856 lie on the Cytoplasmic side of the membrane; sequence NRVRQGYSPL…IRQGLERALL (151 aa). A YXXL motif; contains endocytosis signal motif is present at residues 712–715; the sequence is YSPL. Residues 716-742 form a disordered region; the sequence is SFQTHLPTPRGPDRPEGTEEEGGERDR. 2 S-palmitoyl cysteine; by host lipidation sites follow: Cys764 and Cys837. The short motif at 855-856 is the Di-leucine internalization motif element; the sequence is LL.

The protein belongs to the HIV-1 env protein family. The mature envelope protein (Env) consists of a homotrimer of non-covalently associated gp120-gp41 heterodimers. The resulting complex protrudes from the virus surface as a spike. There seems to be as few as 10 spikes on the average virion. Interacts with host CD4, CCR5 and CXCR4. Gp120 also interacts with the C-type lectins CD209/DC-SIGN and CLEC4M/DC-SIGNR (collectively referred to as DC-SIGN(R)). Gp120 and gp41 interact with GalCer. Gp120 interacts with host ITGA4/ITGB7 complex; on CD4+ T-cells, this interaction results in rapid activation of integrin ITGAL/LFA-1, which facilitates efficient cell-to-cell spreading of HIV-1. Gp120 interacts with cell-associated heparan sulfate; this interaction increases virus infectivity on permissive cells and may be involved in infection of CD4- cells. In terms of assembly, the mature envelope protein (Env) consists of a homotrimer of non-covalently associated gp120-gp41 heterodimers. The resulting complex protrudes from the virus surface as a spike. There seems to be as few as 10 spikes on the average virion. Highly glycosylated by host. The high number of glycan on the protein is reffered to as 'glycan shield' because it contributes to hide protein sequence from adaptive immune system. Post-translationally, palmitoylation of the transmembrane protein and of Env polyprotein (prior to its proteolytic cleavage) is essential for their association with host cell membrane lipid rafts. Palmitoylation is therefore required for envelope trafficking to classical lipid rafts, but not for viral replication. In terms of processing, specific enzymatic cleavages in vivo yield mature proteins. Envelope glycoproteins are synthesized as an inactive precursor that is heavily N-glycosylated and processed likely by host cell furin in the Golgi to yield the mature SU and TM proteins. The cleavage site between SU and TM requires the minimal sequence [KR]-X-[KR]-R. About 2 of the 9 disulfide bonds of gp41 are reduced by P4HB/PDI, following binding to CD4 receptor.

It is found in the virion membrane. The protein resides in the host cell membrane. The protein localises to the host endosome membrane. Functionally, oligomerizes in the host endoplasmic reticulum into predominantly trimers. In a second time, gp160 transits in the host Golgi, where glycosylation is completed. The precursor is then proteolytically cleaved in the trans-Golgi and thereby activated by cellular furin or furin-like proteases to produce gp120 and gp41. Attaches the virus to the host lymphoid cell by binding to the primary receptor CD4. This interaction induces a structural rearrangement creating a high affinity binding site for a chemokine coreceptor like CXCR4 and/or CCR5. Acts as a ligand for CD209/DC-SIGN and CLEC4M/DC-SIGNR, which are respectively found on dendritic cells (DCs), and on endothelial cells of liver sinusoids and lymph node sinuses. These interactions allow capture of viral particles at mucosal surfaces by these cells and subsequent transmission to permissive cells. HIV subverts the migration properties of dendritic cells to gain access to CD4+ T-cells in lymph nodes. Virus transmission to permissive T-cells occurs either in trans (without DCs infection, through viral capture and transmission), or in cis (following DCs productive infection, through the usual CD4-gp120 interaction), thereby inducing a robust infection. In trans infection, bound virions remain infectious over days and it is proposed that they are not degraded, but protected in non-lysosomal acidic organelles within the DCs close to the cell membrane thus contributing to the viral infectious potential during DCs' migration from the periphery to the lymphoid tissues. On arrival at lymphoid tissues, intact virions recycle back to DCs' cell surface allowing virus transmission to CD4+ T-cells. Its function is as follows. Acts as a class I viral fusion protein. Under the current model, the protein has at least 3 conformational states: pre-fusion native state, pre-hairpin intermediate state, and post-fusion hairpin state. During fusion of viral and target intracellular membranes, the coiled coil regions (heptad repeats) assume a trimer-of-hairpins structure, positioning the fusion peptide in close proximity to the C-terminal region of the ectodomain. The formation of this structure appears to drive apposition and subsequent fusion of viral and target cell membranes. Complete fusion occurs in host cell endosomes and is dynamin-dependent, however some lipid transfer might occur at the plasma membrane. The virus undergoes clathrin-dependent internalization long before endosomal fusion, thus minimizing the surface exposure of conserved viral epitopes during fusion and reducing the efficacy of inhibitors targeting these epitopes. Membranes fusion leads to delivery of the nucleocapsid into the cytoplasm. This is Envelope glycoprotein gp160 from Homo sapiens (Human).